The chain runs to 198 residues: uncharacterized protein (198 aa).

The segment at 9-43 (CPVCGGKGTFVITSHQIDIPYFGPVLETTMICEKC) adopts a C4-type zinc-finger fold.

This sequence belongs to the ZPR1 family.

This is an uncharacterized protein from Methanocaldococcus jannaschii (strain ATCC 43067 / DSM 2661 / JAL-1 / JCM 10045 / NBRC 100440) (Methanococcus jannaschii).